The sequence spans 952 residues: Valine--tRNA ligase (952 aa).

The short motif at Pro45 to His55 is the 'HIGH' region element. Positions Lys571–Ser575 match the 'KMSKS' region motif. Lys574 serves as a coordination point for ATP. Residues Lys894–Ala950 adopt a coiled-coil conformation.

This sequence belongs to the class-I aminoacyl-tRNA synthetase family. ValS type 1 subfamily. As to quaternary structure, monomer.

The protein resides in the cytoplasm. It carries out the reaction tRNA(Val) + L-valine + ATP = L-valyl-tRNA(Val) + AMP + diphosphate. Functionally, catalyzes the attachment of valine to tRNA(Val). As ValRS can inadvertently accommodate and process structurally similar amino acids such as threonine, to avoid such errors, it has a 'posttransfer' editing activity that hydrolyzes mischarged Thr-tRNA(Val) in a tRNA-dependent manner. The chain is Valine--tRNA ligase from Nitrobacter winogradskyi (strain ATCC 25391 / DSM 10237 / CIP 104748 / NCIMB 11846 / Nb-255).